The primary structure comprises 296 residues: N-acetylmuramic acid 6-phosphate etherase 2 (296 aa).

One can recognise an SIS domain in the interval 55 to 218 (IIKSFNQGGR…STISMIGIGK (164 aa)). Glutamate 83 (proton donor) is an active-site residue. Residue glutamate 114 is part of the active site.

The protein belongs to the GCKR-like family. MurNAc-6-P etherase subfamily. Homodimer.

The enzyme catalyses N-acetyl-D-muramate 6-phosphate + H2O = N-acetyl-D-glucosamine 6-phosphate + (R)-lactate. The protein operates within amino-sugar metabolism; N-acetylmuramate degradation. Specifically catalyzes the cleavage of the D-lactyl ether substituent of MurNAc 6-phosphate, producing GlcNAc 6-phosphate and D-lactate. In Enterococcus faecalis (strain ATCC 700802 / V583), this protein is N-acetylmuramic acid 6-phosphate etherase 2.